The primary structure comprises 433 residues: Enolase (433 aa).

(2R)-2-phosphoglycerate is bound at residue glutamine 167. The Proton donor role is filled by glutamate 209. Mg(2+)-binding residues include aspartate 246, glutamate 291, and aspartate 318. Residues lysine 343, arginine 372, serine 373, and lysine 394 each coordinate (2R)-2-phosphoglycerate. Lysine 343 acts as the Proton acceptor in catalysis.

This sequence belongs to the enolase family. As to quaternary structure, component of the RNA degradosome, a multiprotein complex involved in RNA processing and mRNA degradation. Mg(2+) is required as a cofactor.

It localises to the cytoplasm. The protein localises to the secreted. It is found in the cell surface. The enzyme catalyses (2R)-2-phosphoglycerate = phosphoenolpyruvate + H2O. Its pathway is carbohydrate degradation; glycolysis; pyruvate from D-glyceraldehyde 3-phosphate: step 4/5. Functionally, catalyzes the reversible conversion of 2-phosphoglycerate (2-PG) into phosphoenolpyruvate (PEP). It is essential for the degradation of carbohydrates via glycolysis. The polypeptide is Enolase (Aeromonas hydrophila subsp. hydrophila (strain ATCC 7966 / DSM 30187 / BCRC 13018 / CCUG 14551 / JCM 1027 / KCTC 2358 / NCIMB 9240 / NCTC 8049)).